Here is a 532-residue protein sequence, read N- to C-terminus: Flavin-containing monooxygenase 3 (532 aa).

Residues 9–13 (GAGVS), glutamate 32, 40–41 (LW), and 61–62 (NS) each bind FAD. Residues 60–61 (TN) and 195–198 (SGCD) contribute to the NADP(+) site. Residue serine 401 is modified to Phosphoserine. A helical transmembrane segment spans residues 512-532 (CHLVKLFVLPVLFIAVFLALI).

The protein belongs to the FMO family. FAD serves as cofactor.

The protein resides in the microsome membrane. Its subcellular location is the endoplasmic reticulum membrane. The enzyme catalyses trimethylamine + NADPH + O2 = trimethylamine N-oxide + NADP(+) + H2O. It catalyses the reaction N,N-dimethylaniline + NADPH + O2 + H(+) = N,N-dimethylaniline N-oxide + NADP(+) + H2O. It carries out the reaction hypotaurine + NADPH + O2 + H(+) = taurine + NADP(+) + H2O. The catalysed reaction is (S)-nicotine + NADPH + O2 = trans-(S)-nicotine N(1')-oxide + NADP(+) + H2O. The enzyme catalyses albendazole + NADPH + O2 + H(+) = albendazole S-oxide + NADP(+) + H2O. Functionally, essential hepatic enzyme that catalyzes the oxygenation of a wide variety of nitrogen- and sulfur-containing compounds including drugs as well as dietary compounds. Plays an important role in the metabolism of trimethylamine (TMA), via the production of trimethylamine N-oxide (TMAO) metabolite. TMA is generated by the action of gut microbiota using dietary precursors such as choline, choline containing compounds, betaine or L-carnitine. By regulating TMAO concentration, FMO3 directly impacts both platelet responsiveness and rate of thrombus formation. The polypeptide is Flavin-containing monooxygenase 3 (FMO3) (Canis lupus familiaris (Dog)).